The chain runs to 520 residues: Putative cytochrome P450 CYP13A4 (520 aa).

Heme is bound at residue Cys464.

Belongs to the cytochrome P450 family. The cofactor is heme.

Cytochromes P450 are a group of heme-thiolate monooxygenases. They oxidize a variety of structurally unrelated compounds, including steroids, fatty acids, and xenobiotics. This chain is Putative cytochrome P450 CYP13A4 (cyp-13A4), found in Caenorhabditis elegans.